Here is a 92-residue protein sequence, read N- to C-terminus: Turripeptide UID-02 (92 aa).

The first 21 residues, 1 to 21 (MGFYMLLTVALLLTSLMNVEA), serve as a signal peptide directing secretion. A propeptide spanning residues 22 to 39 (TPVDQAERSALEKSGLGN) is cleaved from the precursor.

Expressed by the venom duct.

The protein resides in the secreted. The chain is Turripeptide UID-02 from Gemmula speciosa (Splendid gem-turris).